A 2355-amino-acid chain; its full sequence is Acetyl-CoA carboxylase 2 (2355 aa).

One can recognise a Biotin carboxylation domain in the interval 138–645; sequence PIHSILVATN…HTGWLDSRIA (508 aa). An ATP-grasp domain is found at 291–485; that stretch reads GRSLVTVPEE…AAQVAVGMGI (195 aa). Residue 317-374 participates in ATP binding; the sequence is CQVVGYPAMIKASWGGGGKGIRKVHNDDEVRALFKQVQGEVPGSPIFIMKVASQSRHL. Residues Glu440, Glu454, and Asn456 each coordinate Mg(2+). The Mn(2+) site is built by Glu440, Glu454, and Asn456. The active site involves Arg458. Positions 772 to 846 constitute a Biotinyl-binding domain; sequence LQNDHDPSKL…QAGELIAKLD (75 aa). Lys813 is subject to N6-biotinyllysine. Position 1133 is a phosphothreonine (Thr1133). Ser1293 carries the phosphoserine modification. In terms of domain architecture, CoA carboxyltransferase N-terminal spans 1593-1932; sequence QYKPLNNLDR…YVGGPLPVLA (340 aa). Residues 1593–2251 are carboxyltransferase; it reads QYKPLNNLDR…ESSLVRNIRK (659 aa). CoA is bound by residues Arg1841, Lys2142, and Arg2144. One can recognise a CoA carboxyltransferase C-terminal domain in the interval 1936–2251; it reads PPERTVEYIP…ESSLVRNIRK (316 aa).

In terms of assembly, homodimer. Biotin serves as cofactor. Mg(2+) is required as a cofactor. Requires Mn(2+) as cofactor. In terms of tissue distribution, widely expressed at low levels.

It localises to the cytoplasm. The protein localises to the cytosol. It carries out the reaction hydrogencarbonate + acetyl-CoA + ATP = malonyl-CoA + ADP + phosphate + H(+). It catalyses the reaction N(6)-biotinyl-L-lysyl-[protein] + hydrogencarbonate + ATP = N(6)-carboxybiotinyl-L-lysyl-[protein] + ADP + phosphate + H(+). It functions in the pathway lipid metabolism; malonyl-CoA biosynthesis; malonyl-CoA from acetyl-CoA: step 1/1. Its function is as follows. Multifunctional enzyme that catalyzes the carboxylation of acetyl-CoA, forming malonyl-CoA, which is used in the plastid for fatty acid synthesis and in the cytosol in various biosynthetic pathways including fatty acid elongation. This Arabidopsis thaliana (Mouse-ear cress) protein is Acetyl-CoA carboxylase 2 (ACC2).